Consider the following 203-residue polypeptide: uncharacterized protein (203 aa).

Belongs to the mimivirus L332/L333/L334 family.

This is an uncharacterized protein from Acanthamoeba polyphaga mimivirus (APMV).